The primary structure comprises 106 residues: HIG1 domain family member 2A (106 aa).

Ala2 carries the N-acetylalanine modification. Positions 20–106 (VIEGFSPTVY…LAASAMKSQA (87 aa)) constitute an HIG1 domain. 2 helical membrane passes run 47-67 (PMVP…LYCF) and 83-103 (IAAQ…SAMK).

As to quaternary structure, associates with cytochrome c oxidase (COX, complex IV); proposed complex component.

The protein resides in the mitochondrion membrane. Its subcellular location is the mitochondrion inner membrane. In terms of biological role, proposed subunit of cytochrome c oxidase (COX, complex IV), which is the terminal component of the mitochondrial respiratory chain that catalyzes the reduction of oxygen to water. May be involved in cytochrome c oxidase activity. May play a role in the assembly of respiratory supercomplexes. In Mus musculus (Mouse), this protein is HIG1 domain family member 2A (Higd2a).